Here is a 624-residue protein sequence, read N- to C-terminus: tRNA uridine 5-carboxymethylaminomethyl modification enzyme MnmG (624 aa).

Residues 13–18 (GGGHAG), Val125, and Ser180 each bind FAD. 273-287 (GPRYCPSIEDKIVRF) lines the NAD(+) pocket. An FAD-binding site is contributed by Gln370.

The protein belongs to the MnmG family. In terms of assembly, homodimer. Heterotetramer of two MnmE and two MnmG subunits. The cofactor is FAD.

It localises to the cytoplasm. In terms of biological role, NAD-binding protein involved in the addition of a carboxymethylaminomethyl (cmnm) group at the wobble position (U34) of certain tRNAs, forming tRNA-cmnm(5)s(2)U34. This chain is tRNA uridine 5-carboxymethylaminomethyl modification enzyme MnmG, found in Legionella pneumophila (strain Lens).